A 218-amino-acid chain; its full sequence is Hypoxanthine-guanine phosphoribosyltransferase (218 aa).

Alanine 2 carries the post-translational modification N-acetylalanine. Residue lysine 69 participates in GMP binding. Residue lysine 103 is modified to N6-acetyllysine. Residue lysine 115 forms a Glycyl lysine isopeptide (Lys-Gly) (interchain with G-Cter in SUMO1); alternate linkage. A Glycyl lysine isopeptide (Lys-Gly) (interchain with G-Cter in SUMO2); alternate cross-link involves residue lysine 115. GMP is bound by residues 134-142, lysine 166, 186-188, and aspartate 194; these read EDIIDTGKT and KFV. The active-site Proton acceptor is the aspartate 138. At threonine 142 the chain carries Phosphothreonine. Residue aspartate 194 coordinates Mg(2+).

Belongs to the purine/pyrimidine phosphoribosyltransferase family. Homotetramer. The cofactor is Mg(2+).

It localises to the cytoplasm. It catalyses the reaction IMP + diphosphate = hypoxanthine + 5-phospho-alpha-D-ribose 1-diphosphate. The catalysed reaction is GMP + diphosphate = guanine + 5-phospho-alpha-D-ribose 1-diphosphate. Its pathway is purine metabolism; IMP biosynthesis via salvage pathway; IMP from hypoxanthine: step 1/1. Functionally, converts guanine to guanosine monophosphate, and hypoxanthine to inosine monophosphate. Transfers the 5-phosphoribosyl group from 5-phosphoribosylpyrophosphate onto the purine. Plays a central role in the generation of purine nucleotides through the purine salvage pathway. The polypeptide is Hypoxanthine-guanine phosphoribosyltransferase (HPRT1) (Pan troglodytes (Chimpanzee)).